The sequence spans 241 residues: Uridylate kinase (241 aa).

15–18 (KLSG) provides a ligand contact to ATP. The involved in allosteric activation by GTP stretch occupies residues 23–28 (GTEGFG). UMP is bound at residue Gly-57. Gly-58 and Arg-62 together coordinate ATP. UMP-binding positions include Asp-77 and 138-145 (TGNPFFTT). ATP is bound by residues Thr-165, Phe-171, and Asp-174.

The protein belongs to the UMP kinase family. Homohexamer.

The protein localises to the cytoplasm. The enzyme catalyses UMP + ATP = UDP + ADP. It participates in pyrimidine metabolism; CTP biosynthesis via de novo pathway; UDP from UMP (UMPK route): step 1/1. Allosterically activated by GTP. Inhibited by UTP. Its function is as follows. Catalyzes the reversible phosphorylation of UMP to UDP. The sequence is that of Uridylate kinase from Shigella dysenteriae serotype 1 (strain Sd197).